Consider the following 346-residue polypeptide: Very-long-chain 3-oxoacyl-CoA reductase (346 aa).

The chain crosses the membrane as a helical span at residues 26–46 (SAYFLLAAGSLFVASRALTFV). 8 residues coordinate NADP(+): valine 71, aspartate 126, aspartate 134, asparagine 153, tyrosine 220, lysine 224, isoleucine 253, and serine 255. Tyrosine 220 functions as the Proton donor in the catalytic mechanism. Lysine 224 functions as the Lowers pKa of active site Tyr in the catalytic mechanism.

It belongs to the short-chain dehydrogenases/reductases (SDR) family.

It is found in the endoplasmic reticulum membrane. It catalyses the reaction a very-long-chain (3R)-3-hydroxyacyl-CoA + NADP(+) = a very-long-chain 3-oxoacyl-CoA + NADPH + H(+). The protein operates within lipid metabolism; fatty acid biosynthesis. Its function is as follows. Component of the microsomal membrane bound fatty acid elongation system, which produces the 26-carbon very long-chain fatty acids (VLCFA) from palmitate. Catalyzes the reduction of the 3-ketoacyl-CoA intermediate that is formed in each cycle of fatty acid elongation. VLCFAs serve as precursors for ceramide and sphingolipids. The sequence is that of Very-long-chain 3-oxoacyl-CoA reductase from Aspergillus oryzae (strain ATCC 42149 / RIB 40) (Yellow koji mold).